Consider the following 471-residue polypeptide: ATP synthase subunit beta (471 aa).

153 to 160 (GGAGVGKT) contacts ATP.

Belongs to the ATPase alpha/beta chains family. As to quaternary structure, F-type ATPases have 2 components, CF(1) - the catalytic core - and CF(0) - the membrane proton channel. CF(1) has five subunits: alpha(3), beta(3), gamma(1), delta(1), epsilon(1). CF(0) has four main subunits: a(1), b(1), b'(1) and c(9-12).

It localises to the cell inner membrane. It carries out the reaction ATP + H2O + 4 H(+)(in) = ADP + phosphate + 5 H(+)(out). Its function is as follows. Produces ATP from ADP in the presence of a proton gradient across the membrane. The catalytic sites are hosted primarily by the beta subunits. In Methylibium petroleiphilum (strain ATCC BAA-1232 / LMG 22953 / PM1), this protein is ATP synthase subunit beta.